A 517-amino-acid chain; its full sequence is DNA-(apurinic or apyrimidinic site) endonuclease 2 (517 aa).

Residues asparagine 9 and glutamate 34 each coordinate Mg(2+). The Claspin-like CKB motif signature appears at 82–90; the sequence is EEGLSGVFC. Tyrosine 142 is a catalytic residue. Mg(2+)-binding residues include aspartate 183, asparagine 185, aspartate 299, and histidine 300. The active-site Proton donor/acceptor is the aspartate 183. Catalysis depends on histidine 300, which acts as the Proton acceptor. The segment covering 347 to 362 has biased composition (polar residues); it reads GNTTEESSELTGTPSF. Positions 347–366 are disordered; sequence GNTTEESSELTGTPSFTEGA. The PCNA interacting protein (PIP) box signature appears at 395 to 402; that stretch reads QGNLLSFF. Cysteine 463, histidine 466, cysteine 489, and cysteine 503 together coordinate Zn(2+). The segment at 463 to 512 adopts a GRF-type zinc-finger fold; it reads CKGHSEPCVLRTVKKAGPNCGRQFYVCARPEGHSSNPQARCNFFLWLTKK.

Belongs to the DNA repair enzymes AP/ExoA family. In terms of assembly, interacts (via PIP box and GRF-type Zinc finger domain) with pcna; the interaction is required for 3 -5 SSB end resection, assembly of a checkpoint protein complex to SSB sites, and SSB signaling. Interacts with chek1. The cofactor is Mg(2+). It depends on Mn(2+) as a cofactor. As to expression, expressed in eggs (at protein level).

The protein localises to the nucleus. It is found in the chromosome. Its subcellular location is the cytoplasm. The protein resides in the mitochondrion. It carries out the reaction Exonucleolytic cleavage in the 3'- to 5'-direction to yield nucleoside 5'-phosphates.. Its activity is regulated as follows. 3'-5' nuclease activity is stimulated in presence of pcna. Its function is as follows. Functions as a weak apurinic/apyrimidinic (AP) endodeoxyribonuclease in the DNA base excision repair (BER) pathway of DNA lesions induced by oxidative and alkylating agents. Initiates repair of AP sites in DNA by catalyzing hydrolytic incision of the phosphodiester backbone immediately adjacent to the damage, generating a single-strand break with 5'-deoxyribose phosphate and 3'-hydroxyl ends. Exhibits 3'-5' exonuclease activity on a 3' DNA substrate; nuclease activity is stimulated by interaction with pcna. Has a preference for the 3' recessed ends over blunt-ended substrates, in both the presence and the absence of pcna. Generates single-stranded DNA (ssDNA) via 3'-5' single-strand break (SSB) end resection, thereby promoting a DNA damage response via replication protein A (rpa2)-binding to ssDNA and the recruitment of a checkpoint protein complex, including atr, atr-interacting protein atrip, and rad9, to damage sites following oxidative stress. Plays a role in reversing blocked 3' DNA ends, problematic lesions that preclude DNA synthesis. Required for chek1 phosphorylation induced by hydrogen peroxide but not by stalled replication forks. The chain is DNA-(apurinic or apyrimidinic site) endonuclease 2 from Xenopus laevis (African clawed frog).